A 125-amino-acid chain; its full sequence is MIRGIGIDIVEVNRISDMVDKWGERFLNKVYTPYEVNYCKFKSNTYECLAGRFAAKEAFVKMLGTGFKHIYFKDIEVRSDEKGKPYLRIKGNADRLTKESGIKRIHLSISHERKFAIAFVVGEEG.

Mg(2+) contacts are provided by aspartate 8 and glutamate 57.

The protein belongs to the P-Pant transferase superfamily. AcpS family. The cofactor is Mg(2+).

The protein resides in the cytoplasm. The catalysed reaction is apo-[ACP] + CoA = holo-[ACP] + adenosine 3',5'-bisphosphate + H(+). In terms of biological role, transfers the 4'-phosphopantetheine moiety from coenzyme A to a Ser of acyl-carrier-protein. This chain is Holo-[acyl-carrier-protein] synthase, found in Halothermothrix orenii (strain H 168 / OCM 544 / DSM 9562).